Consider the following 62-residue polypeptide: Large ribosomal subunit protein bL28 (62 aa).

The tract at residues 1–28 (MARVCAITGRKARSGNSRSHAMNATKRK) is disordered.

This sequence belongs to the bacterial ribosomal protein bL28 family.

The protein is Large ribosomal subunit protein bL28 of Bacillus thuringiensis (strain Al Hakam).